The following is a 382-amino-acid chain: Threonine synthase (382 aa).

An N6-(pyridoxal phosphate)lysine modification is found at K93. Residues N119, 219–223, and T347 contribute to the pyridoxal 5'-phosphate site; that span reads GNAGN.

This sequence belongs to the threonine synthase family. It depends on pyridoxal 5'-phosphate as a cofactor.

The enzyme catalyses O-phospho-L-homoserine + H2O = L-threonine + phosphate. Its pathway is amino-acid biosynthesis; L-threonine biosynthesis; L-threonine from L-aspartate: step 5/5. Functionally, catalyzes the gamma-elimination of phosphate from L-phosphohomoserine and the beta-addition of water to produce L-threonine. The protein is Threonine synthase (thrC) of Synechocystis sp. (strain ATCC 27184 / PCC 6803 / Kazusa).